A 220-amino-acid polypeptide reads, in one-letter code: Translation initiation factor IF-3 (220 aa).

The disordered stretch occupies residues 182–220; sequence TPLVKKDDKEEPATRAVRTITAPPRPTSARLASKPAGNG. The segment covering 185-194 has biased composition (basic and acidic residues); sequence VKKDDKEEPA.

It belongs to the IF-3 family. As to quaternary structure, monomer.

It localises to the cytoplasm. Functionally, IF-3 binds to the 30S ribosomal subunit and shifts the equilibrium between 70S ribosomes and their 50S and 30S subunits in favor of the free subunits, thus enhancing the availability of 30S subunits on which protein synthesis initiation begins. The sequence is that of Translation initiation factor IF-3 from Synechococcus sp. (strain WH7803).